The following is a 407-amino-acid chain: B3 domain-containing protein Os07g0183200 (407 aa).

Residues 124–227 constitute a DNA-binding region (TF-B3); that stretch reads FVKTLMISDF…ELYVGVRRQR (104 aa).

The protein resides in the nucleus. The protein is B3 domain-containing protein Os07g0183200 of Oryza sativa subsp. japonica (Rice).